The chain runs to 927 residues: Probable RNA-dependent RNA polymerase 4 (927 aa).

Positions 98 to 135 are disordered; it reads GESPVQFPRTPGKKSCRASQAEVSLDREDPSPKFLRGD. The segment covering 121 to 135 has biased composition (basic and acidic residues); the sequence is SLDREDPSPKFLRGD.

The protein belongs to the RdRP family.

The enzyme catalyses RNA(n) + a ribonucleoside 5'-triphosphate = RNA(n+1) + diphosphate. In terms of biological role, probably involved in the RNA silencing pathway and required for the generation of small interfering RNAs (siRNAs). The protein is Probable RNA-dependent RNA polymerase 4 (RDR4) of Arabidopsis thaliana (Mouse-ear cress).